We begin with the raw amino-acid sequence, 190 residues long: Shikimate kinase (190 aa).

Position 22-27 (22-27 (GSGKST)) interacts with ATP. S26 lines the Mg(2+) pocket. Residues D44, R68, and G90 each coordinate substrate. Residue R127 coordinates ATP. R146 lines the substrate pocket.

This sequence belongs to the shikimate kinase family. Monomer. It depends on Mg(2+) as a cofactor.

The protein resides in the cytoplasm. The enzyme catalyses shikimate + ATP = 3-phosphoshikimate + ADP + H(+). It functions in the pathway metabolic intermediate biosynthesis; chorismate biosynthesis; chorismate from D-erythrose 4-phosphate and phosphoenolpyruvate: step 5/7. Its function is as follows. Catalyzes the specific phosphorylation of the 3-hydroxyl group of shikimic acid using ATP as a cosubstrate. The sequence is that of Shikimate kinase from Microcystis aeruginosa (strain NIES-843 / IAM M-2473).